A 124-amino-acid chain; its full sequence is UPF0382 membrane protein HI_1073 (124 aa).

3 consecutive transmembrane segments (helical) span residues 6 to 26 (LTLV…AAHG), 70 to 90 (SMSS…ALAF), and 95 to 115 (VIVW…ISLA).

The protein belongs to the UPF0382 family.

It localises to the cell membrane. The polypeptide is UPF0382 membrane protein HI_1073 (Haemophilus influenzae (strain ATCC 51907 / DSM 11121 / KW20 / Rd)).